We begin with the raw amino-acid sequence, 181 residues long: ATP-dependent protease subunit HslV (181 aa).

Thr-8 is an active-site residue. Gly-165, Cys-168, and Thr-171 together coordinate Na(+).

Belongs to the peptidase T1B family. HslV subfamily. As to quaternary structure, a double ring-shaped homohexamer of HslV is capped on each side by a ring-shaped HslU homohexamer. The assembly of the HslU/HslV complex is dependent on binding of ATP.

Its subcellular location is the cytoplasm. It carries out the reaction ATP-dependent cleavage of peptide bonds with broad specificity.. With respect to regulation, allosterically activated by HslU binding. Functionally, protease subunit of a proteasome-like degradation complex believed to be a general protein degrading machinery. This chain is ATP-dependent protease subunit HslV, found in Oceanobacillus iheyensis (strain DSM 14371 / CIP 107618 / JCM 11309 / KCTC 3954 / HTE831).